A 514-amino-acid chain; its full sequence is ATP synthase subunit alpha (514 aa).

Residue 170–177 (GDRQIGKT) participates in ATP binding.

It belongs to the ATPase alpha/beta chains family. F-type ATPases have 2 components, CF(1) - the catalytic core - and CF(0) - the membrane proton channel. CF(1) has five subunits: alpha(3), beta(3), gamma(1), delta(1), epsilon(1). CF(0) has three main subunits: a(1), b(2) and c(9-12). The alpha and beta chains form an alternating ring which encloses part of the gamma chain. CF(1) is attached to CF(0) by a central stalk formed by the gamma and epsilon chains, while a peripheral stalk is formed by the delta and b chains.

It is found in the cell inner membrane. The enzyme catalyses ATP + H2O + 4 H(+)(in) = ADP + phosphate + 5 H(+)(out). Functionally, produces ATP from ADP in the presence of a proton gradient across the membrane. The alpha chain is a regulatory subunit. This Ectopseudomonas mendocina (strain ymp) (Pseudomonas mendocina) protein is ATP synthase subunit alpha.